Here is a 115-residue protein sequence, read N- to C-terminus: MNPLIQEITKSQLRSDIPSFRPGDSVRVHVRVVEGTRERIQLFEGVVIKRHGVGVSETYTVRKISSGVGVERTFPLHSPRVAKLEVTRHGRVRRAKLYYLRALRGKAARIKEARR.

This sequence belongs to the bacterial ribosomal protein bL19 family.

In terms of biological role, this protein is located at the 30S-50S ribosomal subunit interface and may play a role in the structure and function of the aminoacyl-tRNA binding site. This is Large ribosomal subunit protein bL19 from Latilactobacillus sakei subsp. sakei (strain 23K) (Lactobacillus sakei subsp. sakei).